Reading from the N-terminus, the 625-residue chain is Probable potassium transport system protein Kup 2 (625 aa).

Transmembrane regions (helical) follow at residues 15 to 35 (LSFA…LYAF), 52 to 72 (ILSL…LVIV), 98 to 118 (GGWL…DGML), 134 to 154 (LSPN…FFLF), 164 to 184 (IGVY…ILGF), 212 to 232 (LALF…ALFA), 246 to 266 (WFAV…ALVL), 284 to 304 (FLPV…QAII), 336 to 356 (VYLP…VVIF), 365 to 385 (AYGI…GIIA), 394 to 414 (FKIL…AGNI), and 417 to 437 (LLTG…VMYT).

The protein belongs to the HAK/KUP transporter (TC 2.A.72) family.

Its subcellular location is the cell inner membrane. It carries out the reaction K(+)(in) + H(+)(in) = K(+)(out) + H(+)(out). Its function is as follows. Transport of potassium into the cell. Likely operates as a K(+):H(+) symporter. The protein is Probable potassium transport system protein Kup 2 of Legionella pneumophila (strain Corby).